We begin with the raw amino-acid sequence, 662 residues long: DNA ligase (662 aa).

NAD(+) contacts are provided by residues 31–35 (DYEYD), 80–81 (SL), and glutamate 109. Catalysis depends on lysine 111, which acts as the N6-AMP-lysine intermediate. Residues arginine 132, glutamate 166, lysine 282, and lysine 306 each contribute to the NAD(+) site. The Zn(2+) site is built by cysteine 400, cysteine 403, cysteine 418, and cysteine 423. Residues 581 to 662 (KVNNIFEGKT…FEEMLKGENI (82 aa)) form the BRCT domain.

Belongs to the NAD-dependent DNA ligase family. LigA subfamily. The cofactor is Mg(2+). Mn(2+) serves as cofactor.

It carries out the reaction NAD(+) + (deoxyribonucleotide)n-3'-hydroxyl + 5'-phospho-(deoxyribonucleotide)m = (deoxyribonucleotide)n+m + AMP + beta-nicotinamide D-nucleotide.. Functionally, DNA ligase that catalyzes the formation of phosphodiester linkages between 5'-phosphoryl and 3'-hydroxyl groups in double-stranded DNA using NAD as a coenzyme and as the energy source for the reaction. It is essential for DNA replication and repair of damaged DNA. The chain is DNA ligase from Thermoanaerobacter pseudethanolicus (strain ATCC 33223 / 39E) (Clostridium thermohydrosulfuricum).